The primary structure comprises 279 residues: Tryptophan synthase alpha chain (279 aa).

Residues glutamate 50 and aspartate 61 each act as proton acceptor in the active site.

It belongs to the TrpA family. In terms of assembly, tetramer of two alpha and two beta chains.

The enzyme catalyses (1S,2R)-1-C-(indol-3-yl)glycerol 3-phosphate + L-serine = D-glyceraldehyde 3-phosphate + L-tryptophan + H2O. Its pathway is amino-acid biosynthesis; L-tryptophan biosynthesis; L-tryptophan from chorismate: step 5/5. Its function is as follows. The alpha subunit is responsible for the aldol cleavage of indoleglycerol phosphate to indole and glyceraldehyde 3-phosphate. This Brucella suis biovar 1 (strain 1330) protein is Tryptophan synthase alpha chain.